We begin with the raw amino-acid sequence, 101 residues long: Large ribosomal subunit protein bL28 (101 aa).

Belongs to the bacterial ribosomal protein bL28 family.

The protein is Large ribosomal subunit protein bL28 of Methylorubrum extorquens (strain CM4 / NCIMB 13688) (Methylobacterium extorquens).